A 280-amino-acid chain; its full sequence is Lipase chaperone (280 aa).

A helical transmembrane segment spans residues Ala5 to Leu22.

This sequence belongs to the lipase chaperone family.

It is found in the cell inner membrane. May be involved in the folding of the extracellular lipase during its passage through the periplasm. The protein is Lipase chaperone (lifO) of Vibrio vulnificus (strain YJ016).